Reading from the N-terminus, the 206-residue chain is Ion-translocating oxidoreductase complex subunit G (206 aa).

Residues 9–29 (GITLALFAAGSTGLTAAINQM) traverse the membrane as a helical segment. Thr174 is modified (FMN phosphoryl threonine).

Belongs to the RnfG family. The complex is composed of six subunits: RsxA, RsxB, RsxC, RsxD, RsxE and RsxG. The cofactor is FMN.

It localises to the cell inner membrane. Part of a membrane-bound complex that couples electron transfer with translocation of ions across the membrane. Required to maintain the reduced state of SoxR. This chain is Ion-translocating oxidoreductase complex subunit G, found in Escherichia coli O157:H7.